The following is a 717-amino-acid chain: Polyribonucleotide nucleotidyltransferase (717 aa).

Mg(2+) is bound by residues Asp486 and Asp492. One can recognise a KH domain in the interval 553–612 (PKIVQLQIDIDKISLVIGSTGKTVKAITDEFEVRVQIEQDGRITLFGTDSLKMQKAKAKI). The S1 motif domain occupies 622-715 (GEIYDGIVKK…KFGKIELELV (94 aa)). The tract at residues 659–689 (RYGDMRHSRYGSGRHSRYGRDNRNTFGMNPP) is disordered. The span at 666–675 (SRYGSGRHSR) shows a compositional bias: basic residues.

Belongs to the polyribonucleotide nucleotidyltransferase family. Mg(2+) serves as cofactor.

The protein resides in the cytoplasm. It catalyses the reaction RNA(n+1) + phosphate = RNA(n) + a ribonucleoside 5'-diphosphate. Involved in mRNA degradation. Catalyzes the phosphorolysis of single-stranded polyribonucleotides processively in the 3'- to 5'-direction. This chain is Polyribonucleotide nucleotidyltransferase, found in Borrelia hermsii (strain HS1 / DAH).